The chain runs to 20 residues: Pregnancy-associated glycoprotein 73B (20 aa).

This sequence belongs to the peptidase A1 family. Post-translationally, N-glycosylated. In terms of tissue distribution, expressed in chorionic epithelium (trophectoderm).

Its subcellular location is the secreted. The protein resides in the extracellular space. This chain is Pregnancy-associated glycoprotein 73B, found in Bubalus bubalis (Domestic water buffalo).